A 157-amino-acid polypeptide reads, in one-letter code: Oleosin-B1 (157 aa).

A polar region spans residues 2–20 (GILRKKKHERNASFKSVLT). Positions 21–138 (SILATQAATF…AAPAAAPAAA (118 aa)) are hydrophobic. Transmembrane regions (helical) follow at residues 22 to 42 (ILAT…LAGT), 45 to 65 (AFIA…PAGI), and 72 to 92 (TGLA…LWLY). Tandem repeats lie at residues 119 to 122 (PRAA), 123 to 126 (PAAA), 127 to 130 (PAAA), 131 to 134 (PAAA), 135 to 138 (PAAA), 139 to 142 (PAPK), 143 to 146 (PAAA), 147 to 150 (PAPK), and 151 to 154 (PAAP). The tract at residues 119–122 (PRAA) is 9 X 4 AA tandem repeats of P-[AR]-[AP]-[AKP]. The disordered stretch occupies residues 137–157 (AAPAPKPAAAPAPKPAAPPAL). Over residues 138–157 (APAPKPAAAPAPKPAAPPAL) the composition is skewed to pro residues.

It belongs to the oleosin family. In terms of tissue distribution, the full-length protein is found in the tapetal lipid bodies of immature anthers, the proteolytically cleaved C-terminal product is found on the coats of pollen grains. Highest expression is in microspores entering and undergoing mitosis. No expression is observed in male-sterile plants, green tissues or roots.

It localises to the lipid droplet. The protein resides in the membrane. Functionally, many of the major pollen coat proteins are derived from endoproteolytic cleavage of oleosin-like proteins. In Brassica napus (Rape), this protein is Oleosin-B1 (OlnB1).